The primary structure comprises 249 residues: Small ribosomal subunit protein uS3 (249 aa).

The region spanning 38–106 (IRDFLSKGLE…QVQLNILEVK (69 aa)) is the KH type-2 domain. The segment covering 218 to 233 (ARDDRGSRRGRNDRPR) has biased composition (basic and acidic residues). Residues 218 to 249 (ARDDRGSRRGRNDRPRRGGGRRRRAAEQKQEG) form a disordered region.

It belongs to the universal ribosomal protein uS3 family. As to quaternary structure, part of the 30S ribosomal subunit. Forms a tight complex with proteins S10 and S14.

In terms of biological role, binds the lower part of the 30S subunit head. Binds mRNA in the 70S ribosome, positioning it for translation. The polypeptide is Small ribosomal subunit protein uS3 (Corynebacterium kroppenstedtii (strain DSM 44385 / JCM 11950 / CIP 105744 / CCUG 35717)).